We begin with the raw amino-acid sequence, 294 residues long: Acetyl-coenzyme A carboxylase carboxyl transferase subunit beta (294 aa).

In terms of domain architecture, CoA carboxyltransferase N-terminal spans 29–294; that stretch reads LWEKCPECGQ…TQEVKLQTNA (266 aa). 4 residues coordinate Zn(2+): Cys-33, Cys-36, Cys-52, and Cys-55. The C4-type zinc-finger motif lies at 33 to 55; the sequence is CPECGQVVYRKDLIDNCSVCSNC.

This sequence belongs to the AccD/PCCB family. Acetyl-CoA carboxylase is a heterohexamer composed of biotin carboxyl carrier protein (AccB), biotin carboxylase (AccC) and two subunits each of ACCase subunit alpha (AccA) and ACCase subunit beta (AccD). Requires Zn(2+) as cofactor.

It is found in the cytoplasm. It carries out the reaction N(6)-carboxybiotinyl-L-lysyl-[protein] + acetyl-CoA = N(6)-biotinyl-L-lysyl-[protein] + malonyl-CoA. It functions in the pathway lipid metabolism; malonyl-CoA biosynthesis; malonyl-CoA from acetyl-CoA: step 1/1. Functionally, component of the acetyl coenzyme A carboxylase (ACC) complex. Biotin carboxylase (BC) catalyzes the carboxylation of biotin on its carrier protein (BCCP) and then the CO(2) group is transferred by the transcarboxylase to acetyl-CoA to form malonyl-CoA. The protein is Acetyl-coenzyme A carboxylase carboxyl transferase subunit beta of Prochlorococcus marinus (strain NATL1A).